Reading from the N-terminus, the 556-residue chain is Putative protein SPATA31F2P (556 aa).

2 disordered regions span residues 133–154 (ALKA…SGSD) and 210–231 (LPKT…WVSP). Over residues 144–154 (SGGQDNDSGSD) the composition is skewed to polar residues.

Belongs to the SPATA31 family.

This Homo sapiens (Human) protein is Putative protein SPATA31F2P.